The chain runs to 316 residues: Olfactory receptor 10H28 (316 aa).

Residues 1–26 (MPGQNYSTISEFILFGFSAFPHQMLP) are Extracellular-facing. A glycan (N-linked (GlcNAc...) asparagine) is linked at Asn5. Residues 27 to 47 (ALFLLYLLMYLFTLLGNLVIM) form a helical membrane-spanning segment. Residues 48 to 57 (AAIWTEHRLH) lie on the Cytoplasmic side of the membrane. Residues 58–78 (TPMYLFLCALSISEILFTVVI) form a helical membrane-spanning segment. Residues 79-100 (TPRMLSDMLSTHRSITFIACAN) are Extracellular-facing. Cys98 and Cys190 are oxidised to a cystine. Residues 101–121 (QLFFSFTFGYTHSFLLVVMGY) traverse the membrane as a helical segment. The Cytoplasmic portion of the chain corresponds to 122–144 (DRYVAICRPLHYHALMSLQGCAR). The helical transmembrane segment at 145–165 (LVAWSWAGGSLIGMALTIIIF) threads the bilayer. Residues 166-207 (HLTFCESNVIHHILCHVFSLLKLACGERTAFVTIAVILVCVT) lie on the Extracellular side of the membrane. A helical transmembrane segment spans residues 208-228 (PLIGCLVFIILSYIFIVAAIL). The Cytoplasmic portion of the chain corresponds to 229 to 241 (RIPSTEGRHKTFS). Residues 242–262 (TCASHLTVVIVHYGFASIIYL) traverse the membrane as a helical segment. Residues 263–273 (KSRGLYSQYTD) are Extracellular-facing. A helical transmembrane segment spans residues 274-294 (TLMSTTYTVFTPFLSPIIFSL). The Cytoplasmic segment spans residues 295–316 (RNKELKNAIIKSFHRNVCQQSI).

Belongs to the G-protein coupled receptor 1 family.

The protein localises to the cell membrane. Functionally, odorant receptor. The sequence is that of Olfactory receptor 10H28 from Mus musculus (Mouse).